A 268-amino-acid chain; its full sequence is Acidic leucine-rich nuclear phosphoprotein 32 family member E (268 aa).

At Met1 the chain carries N-acetylmethionine. 4 LRR repeats span residues 18–38 (EVTE…EGLN), 43–64 (ELEF…PSLN), 65–87 (KLRK…AEKC), and 89–110 (NLTY…EALQ). Lys68 is covalently cross-linked (Glycyl lysine isopeptide (Lys-Gly) (interchain with G-Cter in SUMO2)). The LRRCT domain occupies 123–161 (CEITNLEDYRESIFELLQQITYLDGFDQEDNEAPDSEEE). 2 stretches are compositionally biased toward acidic residues: residues 149–216 (DQED…EEEV) and 226–247 (IQDE…EEEE). The interval 149-268 (DQEDNEAPDS…AEDDGEEEDD (120 aa)) is disordered. The interval 215–268 (EVGLSYLMKEEIQDEEDDDDYVEEGEEEEEEEEGGLRGEKRKRDAEDDGEEEDD) is ZID domain. Positions 248–259 (GGLRGEKRKRDA) are enriched in basic and acidic residues.

The protein belongs to the ANP32 family. Interacts with the importin alpha KPNA1 and KPNA2. Component of a SWR1-like complex, composed of EP400, KAT5/TIP60, TRRAP, BRD8, RUVBL1, RUVBL2, ING3 and ANP32E; the complex does not contain SRCAP. Interacts with H2A.Z/H2AZ1. In terms of processing, phosphorylated. The phosphorylation is nuclear localization signal (NLS)-dependent. Expressed in peripheral blood leukocytes, colon, small intestine, prostate, thymus, spleen, skeletal muscle, liver and kidney.

It localises to the cytoplasm. Its subcellular location is the nucleus. In terms of biological role, histone chaperone that specifically mediates the genome-wide removal of histone H2A.Z/H2AZ1 from the nucleosome: removes H2A.Z/H2AZ1 from its normal sites of deposition, especially from enhancer and insulator regions. Not involved in deposition of H2A.Z/H2AZ1 in the nucleosome. May stabilize the evicted H2A.Z/H2AZ1-H2B dimer, thus shifting the equilibrium towards dissociation and the off-chromatin state. Inhibits activity of protein phosphatase 2A (PP2A). Does not inhibit protein phosphatase 1. May play a role in cerebellar development and synaptogenesis. This is Acidic leucine-rich nuclear phosphoprotein 32 family member E (ANP32E) from Homo sapiens (Human).